Here is a 649-residue protein sequence, read N- to C-terminus: Threonine--tRNA ligase (649 aa).

Residues 1–61 (MIKITFPDGA…TQDGSIEIVT (61 aa)) form the TGS domain. The catalytic stretch occupies residues 242–540 (DHRKLGKELD…LIETYKGAFP (299 aa)). C336, H387, and H517 together coordinate Zn(2+).

The protein belongs to the class-II aminoacyl-tRNA synthetase family. As to quaternary structure, homodimer. Zn(2+) serves as cofactor.

It is found in the cytoplasm. The enzyme catalyses tRNA(Thr) + L-threonine + ATP = L-threonyl-tRNA(Thr) + AMP + diphosphate + H(+). In terms of biological role, catalyzes the attachment of threonine to tRNA(Thr) in a two-step reaction: L-threonine is first activated by ATP to form Thr-AMP and then transferred to the acceptor end of tRNA(Thr). Also edits incorrectly charged L-seryl-tRNA(Thr). The sequence is that of Threonine--tRNA ligase from Streptococcus mutans serotype c (strain ATCC 700610 / UA159).